Here is a 99-residue protein sequence, read N- to C-terminus: 10 kDa heat shock protein, mitochondrial (99 aa).

This sequence belongs to the GroES chaperonin family. As to quaternary structure, homoheptamer arranged in a ring structure. 2 heptameric Hsp10 rings interact with a Hsp60 tetradecamer in the structure of a back-to-back double heptameric ring to form the symmetrical football complex.

It is found in the mitochondrion matrix. Functionally, co-chaperonin implicated in mitochondrial protein import and macromolecular assembly. Together with Hsp60, facilitates the correct folding of imported proteins. May also prevent misfolding and promote the refolding and proper assembly of unfolded polypeptides generated under stress conditions in the mitochondrial matrix. The functional units of these chaperonins consist of heptameric rings of the large subunit Hsp60, which function as a back-to-back double ring. In a cyclic reaction, Hsp60 ring complexes bind one unfolded substrate protein per ring, followed by the binding of ATP and association with 2 heptameric rings of the co-chaperonin Hsp10. This leads to sequestration of the substrate protein in the inner cavity of Hsp60 where, for a certain period of time, it can fold undisturbed by other cell components. Synchronous hydrolysis of ATP in all Hsp60 subunits results in the dissociation of the chaperonin rings and the release of ADP and the folded substrate protein. In Oryzias latipes (Japanese rice fish), this protein is 10 kDa heat shock protein, mitochondrial (hspe1).